Reading from the N-terminus, the 430-residue chain is Tol-Pal system protein TolB (430 aa).

The N-terminal stretch at 1-21 (MKQALRVAFGFLILWASVLHA) is a signal peptide.

It belongs to the TolB family. As to quaternary structure, the Tol-Pal system is composed of five core proteins: the inner membrane proteins TolA, TolQ and TolR, the periplasmic protein TolB and the outer membrane protein Pal. They form a network linking the inner and outer membranes and the peptidoglycan layer.

It is found in the periplasm. Part of the Tol-Pal system, which plays a role in outer membrane invagination during cell division and is important for maintaining outer membrane integrity. TolB occupies a key intermediary position in the Tol-Pal system because it communicates directly with both membrane-embedded components, Pal in the outer membrane and TolA in the inner membrane. The polypeptide is Tol-Pal system protein TolB (Shigella boydii serotype 4 (strain Sb227)).